A 240-amino-acid chain; its full sequence is Aldehyde dehydrogenase, cytosolic 2 (240 aa).

Residues E8 and C42 contribute to the active site. 4 positions are modified to N6-acetyllysine: K106, K149, K151, and K174.

The protein belongs to the aldehyde dehydrogenase family. In terms of assembly, homotetramer. Non-lens specific, predominant form expressed in the liver.

Its subcellular location is the cytoplasm. The catalysed reaction is an aldehyde + NAD(+) + H2O = a carboxylate + NADH + 2 H(+). Its pathway is alcohol metabolism; ethanol degradation; acetate from ethanol: step 2/2. In terms of biological role, elephant shrews, in contrast to other mammals, possess both a lens- and a non-lens specific class-1 aldehyde dehydrogenase. Can convert/oxidize retinaldehyde to retinoic acid. This chain is Aldehyde dehydrogenase, cytosolic 2, found in Macroscelides proboscideus (Short-eared elephant shrew).